We begin with the raw amino-acid sequence, 316 residues long: Tyrosine recombinase XerC (316 aa).

One can recognise a Core-binding (CB) domain in the interval 11–97; it reads SGLRKPLDQF…SLRSFFDFLI (87 aa). The region spanning 118-298 is the Tyr recombinase domain; it reads PLPKNLDVDE…DFQHLADVYD (181 aa). Residues R157, K181, H250, R253, and H276 contribute to the active site. Catalysis depends on Y285, which acts as the O-(3'-phospho-DNA)-tyrosine intermediate.

Belongs to the 'phage' integrase family. XerC subfamily. In terms of assembly, forms a cyclic heterotetrameric complex composed of two molecules of XerC and two molecules of XerD.

The protein resides in the cytoplasm. Site-specific tyrosine recombinase, which acts by catalyzing the cutting and rejoining of the recombining DNA molecules. The XerC-XerD complex is essential to convert dimers of the bacterial chromosome into monomers to permit their segregation at cell division. It also contributes to the segregational stability of plasmids. This Vibrio vulnificus (strain CMCP6) protein is Tyrosine recombinase XerC.